Reading from the N-terminus, the 222-residue chain is Probable transaldolase (222 aa).

K83 (schiff-base intermediate with substrate) is an active-site residue.

This sequence belongs to the transaldolase family. Type 3B subfamily.

The protein resides in the cytoplasm. The enzyme catalyses D-sedoheptulose 7-phosphate + D-glyceraldehyde 3-phosphate = D-erythrose 4-phosphate + beta-D-fructose 6-phosphate. It functions in the pathway carbohydrate degradation; pentose phosphate pathway; D-glyceraldehyde 3-phosphate and beta-D-fructose 6-phosphate from D-ribose 5-phosphate and D-xylulose 5-phosphate (non-oxidative stage): step 2/3. Its function is as follows. Transaldolase is important for the balance of metabolites in the pentose-phosphate pathway. This Nitrosopumilus maritimus (strain SCM1) protein is Probable transaldolase.